The primary structure comprises 228 residues: 7-cyano-7-deazaguanine synthase (228 aa).

Residue 8–18 (LSGGLDSTTCL) participates in ATP binding. Zn(2+) is bound by residues cysteine 188, cysteine 198, cysteine 201, and cysteine 204.

It belongs to the QueC family. Zn(2+) is required as a cofactor.

The enzyme catalyses 7-carboxy-7-deazaguanine + NH4(+) + ATP = 7-cyano-7-deazaguanine + ADP + phosphate + H2O + H(+). The protein operates within purine metabolism; 7-cyano-7-deazaguanine biosynthesis. Catalyzes the ATP-dependent conversion of 7-carboxy-7-deazaguanine (CDG) to 7-cyano-7-deazaguanine (preQ(0)). This Legionella pneumophila (strain Paris) protein is 7-cyano-7-deazaguanine synthase.